Consider the following 226-residue polypeptide: Putative DNA repair protein recA homolog 4 (226 aa).

Position 41 to 48 (Gly41 to Thr48) interacts with ATP.

The protein belongs to the RecA family.

It is found in the cytoplasm. Its function is as follows. Involved in recombination ability and DNA strand transfer activity. The protein is Putative DNA repair protein recA homolog 4 of Arabidopsis thaliana (Mouse-ear cress).